A 308-amino-acid polypeptide reads, in one-letter code: UPF0282 protein STK_23220 (308 aa).

It belongs to the UPF0282 family.

In Sulfurisphaera tokodaii (strain DSM 16993 / JCM 10545 / NBRC 100140 / 7) (Sulfolobus tokodaii), this protein is UPF0282 protein STK_23220.